The chain runs to 93 residues: Defensin 5 (93 aa).

An N-terminal signal peptide occupies residues 1–19; that stretch reads MKKLVLLSALVLLALQVEA. Positions 20-58 are excised as a propeptide; sequence EPTPKTDEGTKTDEQPGKEDQVVSVSIEGQGDPAFQDAV. 3 cysteine pairs are disulfide-bonded: Cys64/Cys92, Cys66/Cys81, and Cys71/Cys91.

Belongs to the alpha-defensin family. As to expression, small intestine. Not present in heart, liver, spleen, kidney, large intestine and colon.

The protein resides in the secreted. Probably contributes to the antimicrobial barrier function of the small intestine. In Rattus norvegicus (Rat), this protein is Defensin 5.